The following is a 166-amino-acid chain: Probable tyrosine-protein phosphatase DG1060 (166 aa).

Positions 9–162 (NFGMVADDLY…LVTYNNAPQW (154 aa)) constitute a Tyrosine-protein phosphatase domain. Catalysis depends on Cys101, which acts as the Phosphocysteine intermediate.

This sequence belongs to the protein-tyrosine phosphatase family.

The protein resides in the cytoplasm. The enzyme catalyses O-phospho-L-tyrosyl-[protein] + H2O = L-tyrosyl-[protein] + phosphate. The polypeptide is Probable tyrosine-protein phosphatase DG1060 (DG1060) (Dictyostelium discoideum (Social amoeba)).